The sequence spans 500 residues: L-arabinose isomerase (500 aa).

Mn(2+) is bound by residues Glu306, Glu333, His350, and His450.

This sequence belongs to the arabinose isomerase family. Homohexamer. Mn(2+) serves as cofactor.

It carries out the reaction beta-L-arabinopyranose = L-ribulose. It participates in carbohydrate degradation; L-arabinose degradation via L-ribulose; D-xylulose 5-phosphate from L-arabinose (bacterial route): step 1/3. Its function is as follows. Catalyzes the conversion of L-arabinose to L-ribulose. This Yersinia pestis (strain Pestoides F) protein is L-arabinose isomerase.